Reading from the N-terminus, the 372-residue chain is Protein L-Myc-1a (372 aa).

Disordered stretches follow at residues 172–226 and 243–306; these read KVAA…ADPF and NYAA…DDLR. Positions 187-197 are enriched in acidic residues; it reads SDDDEDDDEID. Over residues 269–284 the composition is skewed to low complexity; sequence ESSSAPSSPLSSPATS. The bHLH domain occupies 289 to 341; sequence STEQRRNFLERKRRDDLRSRFQALREEIPGLSGSSKTSKVAILTQATDYLLQL. The segment covering 290-306 has biased composition (basic and acidic residues); sequence TEQRRNFLERKRRDDLR. A leucine-zipper region spans residues 341–369; the sequence is LHSSQRRQAQEKRKLKAKQQQLLRRISAL.

As to quaternary structure, efficient DNA binding requires dimerization with another bHLH protein. Binds DNA as a heterodimer with max. Uterus.

The protein resides in the nucleus. The polypeptide is Protein L-Myc-1a (Danio rerio (Zebrafish)).